Reading from the N-terminus, the 101-residue chain is Putative pterin-4-alpha-carbinolamine dehydratase (101 aa).

This sequence belongs to the pterin-4-alpha-carbinolamine dehydratase family.

It catalyses the reaction (4aS,6R)-4a-hydroxy-L-erythro-5,6,7,8-tetrahydrobiopterin = (6R)-L-erythro-6,7-dihydrobiopterin + H2O. In Streptomyces coelicolor (strain ATCC BAA-471 / A3(2) / M145), this protein is Putative pterin-4-alpha-carbinolamine dehydratase.